The sequence spans 217 residues: Adenylate kinase (217 aa).

10-15 (GAGKGT) lines the ATP pocket. Residues 30 to 59 (STGDMFRAAMKEGTPLGLQAKEYIDRGDLV) form an NMP region. Residues threonine 31, arginine 36, 57–59 (DLV), 85–88 (GFPR), and glutamine 92 each bind AMP. An LID region spans residues 126 to 163 (GRRICRNCGATYHLVFHPPAQPGVCDKCGGELYQRPDD). Arginine 127 contributes to the ATP binding site. The Zn(2+) site is built by cysteine 130 and cysteine 133. 136–137 (TY) contacts ATP. 2 residues coordinate Zn(2+): cysteine 150 and cysteine 153. Arginine 160 and arginine 171 together coordinate AMP. Glutamine 199 contacts ATP.

Belongs to the adenylate kinase family. Monomer.

Its subcellular location is the cytoplasm. It carries out the reaction AMP + ATP = 2 ADP. It participates in purine metabolism; AMP biosynthesis via salvage pathway; AMP from ADP: step 1/1. In terms of biological role, catalyzes the reversible transfer of the terminal phosphate group between ATP and AMP. Plays an important role in cellular energy homeostasis and in adenine nucleotide metabolism. This is Adenylate kinase from Geobacillus thermodenitrificans (strain NG80-2).